Reading from the N-terminus, the 435-residue chain is ATP-dependent protease ATPase subunit HslU (435 aa).

Residues Ile18, 60-65 (GVGKTE), Asp248, Glu313, and Arg385 contribute to the ATP site.

This sequence belongs to the ClpX chaperone family. HslU subfamily. A double ring-shaped homohexamer of HslV is capped on each side by a ring-shaped HslU homohexamer. The assembly of the HslU/HslV complex is dependent on binding of ATP.

The protein localises to the cytoplasm. Its function is as follows. ATPase subunit of a proteasome-like degradation complex; this subunit has chaperone activity. The binding of ATP and its subsequent hydrolysis by HslU are essential for unfolding of protein substrates subsequently hydrolyzed by HslV. HslU recognizes the N-terminal part of its protein substrates and unfolds these before they are guided to HslV for hydrolysis. This is ATP-dependent protease ATPase subunit HslU from Allorhizobium ampelinum (strain ATCC BAA-846 / DSM 112012 / S4) (Agrobacterium vitis (strain S4)).